A 232-amino-acid polypeptide reads, in one-letter code: Ribonuclease 3 (232 aa).

An RNase III domain is found at 5–134; sequence QTVLKNHFEI…FLGALLLDKD (130 aa). Residue Glu-47 participates in Mg(2+) binding. The active site involves Asp-51. Residues Asp-120 and Glu-123 each coordinate Mg(2+). Glu-123 is a catalytic residue. One can recognise a DRBM domain in the interval 160–229; that stretch reads DYKTHLQELL…AKNAVEKGLD (70 aa).

The protein belongs to the ribonuclease III family. Homodimer. Mg(2+) is required as a cofactor.

It localises to the cytoplasm. The catalysed reaction is Endonucleolytic cleavage to 5'-phosphomonoester.. Digests double-stranded RNA. Involved in the processing of primary rRNA transcript to yield the immediate precursors to the large and small rRNAs (23S and 16S). Processes some mRNAs, and tRNAs when they are encoded in the rRNA operon. Processes pre-crRNA and tracrRNA of type II CRISPR loci if present in the organism. This chain is Ribonuclease 3, found in Streptococcus pneumoniae (strain ATCC BAA-255 / R6).